We begin with the raw amino-acid sequence, 216 residues long: Probable transaldolase (216 aa).

The Schiff-base intermediate with substrate role is filled by Lys83.

Belongs to the transaldolase family. Type 3B subfamily.

The protein localises to the cytoplasm. It catalyses the reaction D-sedoheptulose 7-phosphate + D-glyceraldehyde 3-phosphate = D-erythrose 4-phosphate + beta-D-fructose 6-phosphate. Its pathway is carbohydrate degradation; pentose phosphate pathway; D-glyceraldehyde 3-phosphate and beta-D-fructose 6-phosphate from D-ribose 5-phosphate and D-xylulose 5-phosphate (non-oxidative stage): step 2/3. In terms of biological role, transaldolase is important for the balance of metabolites in the pentose-phosphate pathway. This chain is Probable transaldolase, found in Caldanaerobacter subterraneus subsp. tengcongensis (strain DSM 15242 / JCM 11007 / NBRC 100824 / MB4) (Thermoanaerobacter tengcongensis).